Reading from the N-terminus, the 115-residue chain is Xenovulene A biosynthesis cluster protein asL2 (115 aa).

Its function is as follows. Part of the gene cluster that mediates the biosynthesis of xenovulene A, an unusual meroterpenoid that has potent inhibitory effects on the human gamma-aminobutyrate A (GABAA) benzodiazepine receptor. The first step of xenovulene A biosynthesis is the biosynthesis of 3-methylorcinaldehyde performed by the non-reducing polyketide synthase aspks1. The salicylate hydroxylase asL1 then catalyzes the oxidative dearomatization of 3-methylorcinaldehyde to yield a dearomatized hydroxycyclohexadione. The 2-oxoglutarate-dependent dioxygenase asL3 further catalyzes the oxidative ring expansion to provide the first tropolone metabolite. The cytochrome P450 monooxygenase asR2 allows the synthesis of tropolone hemiacetal. In parallel, a previously unrecognised class of terpene cyclase, asR6, produces alpha-humulene from farnesylpyrophosphate (FPP). The putative Diels-Alderase asR5 probably catalyzes the formation of the tropolone-humulene skeleton by linking humulene and the polyketide moiety. Oxidative-ring contractions catalyzed by asL4 and asL6 then processively remove carbon atoms from the polyketide to yield xenovulene A. The protein is Xenovulene A biosynthesis cluster protein asL2 of Sarocladium schorii (Acremonium strictum (strain IMI 501407)).